The chain runs to 388 residues: Chorismate synthase (388 aa).

Residues Arg39 and Arg45 each coordinate NADP(+). FMN contacts are provided by residues 132-134 (RSS), 251-252 (NA), Gly296, 311-315 (KPIPT), and Arg337.

In terms of assembly, homotetramer. FMNH2 serves as cofactor.

The enzyme catalyses 5-O-(1-carboxyvinyl)-3-phosphoshikimate = chorismate + phosphate. Its pathway is metabolic intermediate biosynthesis; chorismate biosynthesis; chorismate from D-erythrose 4-phosphate and phosphoenolpyruvate: step 7/7. Functionally, catalyzes the anti-1,4-elimination of the C-3 phosphate and the C-6 proR hydrogen from 5-enolpyruvylshikimate-3-phosphate (EPSP) to yield chorismate, which is the branch point compound that serves as the starting substrate for the three terminal pathways of aromatic amino acid biosynthesis. This reaction introduces a second double bond into the aromatic ring system. This chain is Chorismate synthase, found in Staphylococcus aureus.